The sequence spans 337 residues: tRNA-dihydrouridine synthase B (337 aa).

Residues 19-21 and Gln73 contribute to the FMN site; that span reads PMA. Cys103 serves as the catalytic Proton donor. Residues Lys142, 203–205, and 227–228 each bind FMN; these read NGD and GR.

It belongs to the Dus family. DusB subfamily. FMN serves as cofactor.

It catalyses the reaction a 5,6-dihydrouridine in tRNA + NAD(+) = a uridine in tRNA + NADH + H(+). The catalysed reaction is a 5,6-dihydrouridine in tRNA + NADP(+) = a uridine in tRNA + NADPH + H(+). Its function is as follows. Catalyzes the synthesis of 5,6-dihydrouridine (D), a modified base found in the D-loop of most tRNAs, via the reduction of the C5-C6 double bond in target uridines. This chain is tRNA-dihydrouridine synthase B, found in Pseudomonas syringae pv. tomato (strain ATCC BAA-871 / DC3000).